The chain runs to 628 residues: MDPGIANHTLPEEFEEVVVPEMLEKEVGAKVDVKPTLTTSSPAPSYIELIDPGVHNIEIYAEMYNRPIYRVALFFSLFLIAYAYGLDGNIRYTFQAYATSSYSQHSLLSTVNCIKTVIAAVGQIFFARLSDIFGRFSIMIVSIIFYSMGTIIESQAVNITRFAVGGCFYQLGLTGIILILEVIASDFSNLNWRLLALFIPALPFIINTWISGNVTSAIDANWKWGIGMWAFILPLACIPLGICMLHMRYLARKHAKDRLKPEFEALNKLKWKSFCIDIAFWKLDIIGMLLITVFFGCVLVPFTLAGGLKEEWKTAHIIVPEVIGWVVVLPLYMLWEIKYSRHPLTPWDLIQDRGIFFALLIAFFINFNWYMQGDYMYTVLVVAVHESIKSATRITSLYSFVSVIVGTILGFILIKVRRTKPFIIFGISCWIVSFGLLVHYRGDSGAHSGIIGSLCLLGFGAGSFTYVTQASIQASAKTHARMAVVTSLYLATYNIGSAFGSSVSGAVWTNILPKEISKRISDPTLAAQAYGSPFTFITTYTWGTPERIALVMSYRYVQKILCIIGLVFCFPLLGCAFMLRNHKLTDSIALEGNDHLESKNTFEIEEKEESFLKNKFFTHFTSSKDRKD.

A run of 14 helical transmembrane segments spans residues 68–88, 107–127, 132–152, 164–184, 194–214, 225–245, 285–305, 317–337, 354–374, 394–414, 420–440, 448–468, 488–508, and 559–579; these read IYRV…GLDG, LLST…IFFA, IFGR…GTII, VGGC…EVIA, LLAL…SGNV, GIGM…ICML, IIGM…FTLA, IIVP…LWEI, GIFF…MQGD, ITSL…FILI, KPFI…LVHY, SGII…TYVT, LYLA…GAVW, and KILC…AFML.

Belongs to the major facilitator superfamily.

The protein resides in the endosome membrane. Its function is as follows. Involved in the transport of siderophore ferrioxamine B and so has a role in iron homeostasis. This chain is Siderophore iron transporter 1 (SIT1), found in Saccharomyces cerevisiae (strain ATCC 204508 / S288c) (Baker's yeast).